Consider the following 680-residue polypeptide: Forkhead box protein P4 (680 aa).

Positions Met1 to Gln17 are enriched in polar residues. Residues Met1–Met56 are disordered. Ser52 and Ser86 each carry phosphoserine. Glycyl lysine isopeptide (Lys-Gly) (interchain with G-Cter in SUMO2) cross-links involve residues Lys175 and Lys246. A disordered region spans residues Phe262 to His306. The span at Thr276 to Thr286 shows a compositional bias: polar residues. Residues Ser287–Pro298 show a composition bias toward basic and acidic residues. The segment at Gly307–His332 adopts a C2H2-type zinc-finger fold. The tract at residues Val349–Leu370 is leucine-zipper. Residue Lys378 forms a Glycyl lysine isopeptide (Lys-Gly) (interchain with G-Cter in SUMO2) linkage. The interval Gly407–Lys445 is disordered. The segment at residues Arg467–Lys559 is a DNA-binding region (fork-head). Ser554 carries the post-translational modification Phosphoserine. The tract at residues Pro602 to Ser680 is disordered. Polar residues predominate over residues Ser617–Val635. Acidic residues predominate over residues Arg668–Ser680.

As to quaternary structure, forms homodimers and heterodimers with FOXP1 and FOXP2. Dimerization is required for DNA-binding.

It localises to the nucleus. Its function is as follows. Transcriptional repressor that represses lung-specific expression. The chain is Forkhead box protein P4 (FOXP4) from Homo sapiens (Human).